The primary structure comprises 59 residues: MKPLLVVFVFLFLWDPVLAEMHKKCYKNGICRLECYESEMLVAYCMFQLECCVKGNPAP.

The N-terminal stretch at 1–19 is a signal peptide; sequence MKPLLVVFVFLFLWDPVLA. 3 disulfides stabilise this stretch: Cys-25–Cys-51, Cys-31–Cys-45, and Cys-35–Cys-52.

Belongs to the beta-defensin family.

It is found in the secreted. Functionally, has antibacterial activity. In Pan troglodytes (Chimpanzee), this protein is Beta-defensin 134 (DEFB134).